A 480-amino-acid polypeptide reads, in one-letter code: ATP synthase subunit beta (480 aa).

158 to 165 (GGAGVGKT) is a binding site for ATP.

Belongs to the ATPase alpha/beta chains family. As to quaternary structure, F-type ATPases have 2 components, CF(1) - the catalytic core - and CF(0) - the membrane proton channel. CF(1) has five subunits: alpha(3), beta(3), gamma(1), delta(1), epsilon(1). CF(0) has three main subunits: a(1), b(2) and c(9-12). The alpha and beta chains form an alternating ring which encloses part of the gamma chain. CF(1) is attached to CF(0) by a central stalk formed by the gamma and epsilon chains, while a peripheral stalk is formed by the delta and b chains.

Its subcellular location is the cell inner membrane. It catalyses the reaction ATP + H2O + 4 H(+)(in) = ADP + phosphate + 5 H(+)(out). Its function is as follows. Produces ATP from ADP in the presence of a proton gradient across the membrane. The catalytic sites are hosted primarily by the beta subunits. This chain is ATP synthase subunit beta, found in Koribacter versatilis (strain Ellin345).